Reading from the N-terminus, the 161-residue chain is Allophycocyanin alpha chain (161 aa).

The residue at position 71 (Asn-71) is an N4-methylasparagine. Residue Cys-81 coordinates (2R,3E)-phycocyanobilin.

It belongs to the phycobiliprotein family. Heterodimer of an alpha and a beta chain. Post-translationally, contains one covalently linked phycocyanobilin chromophore.

It is found in the cellular thylakoid membrane. Light-harvesting photosynthetic bile pigment-protein from the phycobiliprotein complex. Allophycocyanin has a maximum absorption at approximately 650 nanometers. In Synechocystis sp. (strain PCC 6714) (Aphanocapsa sp. (strain PCC 6714)), this protein is Allophycocyanin alpha chain (apcA).